A 328-amino-acid polypeptide reads, in one-letter code: UPF0421 protein SSP0904 (328 aa).

The next 4 helical transmembrane spans lie at 26–46, 61–81, 84–104, and 132–152; these read LFCL…IVTI, LPAT…FGDQ, FAYA…NLHV, and LLTA…ILPP.

It belongs to the UPF0421 family.

The protein localises to the cell membrane. The sequence is that of UPF0421 protein SSP0904 from Staphylococcus saprophyticus subsp. saprophyticus (strain ATCC 15305 / DSM 20229 / NCIMB 8711 / NCTC 7292 / S-41).